The chain runs to 103 residues: Cyclotide vibi-I (103 aa).

A signal peptide spans 1–9 (AAFALPAFA). The propeptide occupies 10-69 (SFEKDVITPAALEAVLNRKAPLSNIMMENDAILNVIANVKTVISNPVLEEALLKTNHGVN). A cross-link (cyclopeptide (Gly-Asn)) is located at residues 70 to 99 (GIPCGESCVWIPCLTSTVGCSCKSKVCYRN). Disulfide bonds link Cys73-Cys89, Cys77-Cys91, and Cys82-Cys96. Positions 100 to 103 (SLDN) are excised as a propeptide.

This is a cyclic peptide.

In terms of biological role, probably participates in a plant defense mechanism. This chain is Cyclotide vibi-I, found in Viola biflora (Yellow wood violet).